Consider the following 160-residue polypeptide: MTATKHKHPGVVAENRKARHDYDIEETIEAGIVLSGSEIKSVRAGRVNLRGSFARVIDDEVFLYDAHIAPYEQSGKYFNHDPMRPRKLLLHRREINRLNGLVRMKGMTLVPLKVYFKGRRAKVELGVARGKKIYDKREDIARRDAARDIDRALKRARHDL.

The protein belongs to the SmpB family.

The protein localises to the cytoplasm. Functionally, required for rescue of stalled ribosomes mediated by trans-translation. Binds to transfer-messenger RNA (tmRNA), required for stable association of tmRNA with ribosomes. tmRNA and SmpB together mimic tRNA shape, replacing the anticodon stem-loop with SmpB. tmRNA is encoded by the ssrA gene; the 2 termini fold to resemble tRNA(Ala) and it encodes a 'tag peptide', a short internal open reading frame. During trans-translation Ala-aminoacylated tmRNA acts like a tRNA, entering the A-site of stalled ribosomes, displacing the stalled mRNA. The ribosome then switches to translate the ORF on the tmRNA; the nascent peptide is terminated with the 'tag peptide' encoded by the tmRNA and targeted for degradation. The ribosome is freed to recommence translation, which seems to be the essential function of trans-translation. The protein is SsrA-binding protein of Chloroflexus aurantiacus (strain ATCC 29364 / DSM 637 / Y-400-fl).